Reading from the N-terminus, the 352-residue chain is Uroporphyrinogen decarboxylase (352 aa).

Residues arginine 29–arginine 33, phenylalanine 48, aspartate 78, tyrosine 154, serine 209, and histidine 322 each bind substrate.

The protein belongs to the uroporphyrinogen decarboxylase family. In terms of assembly, homodimer.

It is found in the cytoplasm. The catalysed reaction is uroporphyrinogen III + 4 H(+) = coproporphyrinogen III + 4 CO2. The protein operates within porphyrin-containing compound metabolism; protoporphyrin-IX biosynthesis; coproporphyrinogen-III from 5-aminolevulinate: step 4/4. Functionally, catalyzes the decarboxylation of four acetate groups of uroporphyrinogen-III to yield coproporphyrinogen-III. This Bacillus pumilus (strain SAFR-032) protein is Uroporphyrinogen decarboxylase.